An 821-amino-acid polypeptide reads, in one-letter code: MPTVISASVAPRTAAEPRSPGPVPHPAQSKATEAGGGNPSGIYSAIISRNFPIIGVKEKTFEQLHKKCLEKKVLYVDPEFPPDETSLFYSQKFPIQFVWKRPPEICENPRFIIDGANRTDICQGELGDCWFLAAIACLTLNQHLLFRVIPHDQSFIENYAGIFHFQFWRYGEWVDVVIDDCLPTYNNQLVFTKSNHRNEFWSALLEKAYAKLHGSYEALKGGNTTEAMEDFTGGVAEFFEIRDAPSDMYKIMKKAIERGSLMGCSIDDGTNMTYGTSPSGLNMGELIARMVRNMDNSLLQDSDLDPRGSDERPTRTIIPVQYETRMACGLVRGHAYSVTGLDEVPFKGEKVKLVRLRNPWGQVEWNGSWSDRWKDWSFVDKDEKARLQHQVTEDGEFWMSYEDFIYHFTKLEICNLTADALQSDKLQTWTVSVNEGRWVRGCSAGGCRNFPDTFWTNPQYRLKLLEEDDDPDDSEVICSFLVALMQKNRRKDRKLGASLFTIGFAIYEVPKEMHGNKQHLQKDFFLYNASKARSKTYINMREVSQRFRLPPSEYVIVPSTYEPHQEGEFILRVFSEKRNLSEEVENTISVDRPVKKKKTKPIIFVSDRANSNKELGVDQESEEGKGKTSPDKQKQSPQPQPGSSDQESEEQQQFRNIFKQIAGDDMEICADELKKVLNTVVNKHKDLKTHGFTLESCRSMIALMDTDGSGKLNLQEFHHLWNKIKAWQKIFKHYDTDQSGTINSYEMRNAVNDAGFHLNNQLYDIITMRYADKHMNIDFDSFICCFVRLEGMFRAFHAFDKDGDGIIKLNVLEWLQLTMYA.

Residues 7–37 are disordered; it reads ASVAPRTAAEPRSPGPVPHPAQSKATEAGGG. The Calpain catalytic domain maps to 74-417; the sequence is LYVDPEFPPD…FTKLEICNLT (344 aa). Catalysis depends on residues cysteine 129, histidine 334, and asparagine 358. Residues 418–586 form a domain III region; it reads ADALQSDKLQ…KRNLSEEVEN (169 aa). The segment at 587–649 is linker; that stretch reads TISVDRPVKK…QPGSSDQESE (63 aa). Positions 609-652 are disordered; the sequence is ANSNKELGVDQESEEGKGKTSPDKQKQSPQPQPGSSDQESEEQQ. Over residues 622–634 the composition is skewed to basic and acidic residues; that stretch reads EEGKGKTSPDKQK. Over residues 635–645 the composition is skewed to low complexity; it reads QSPQPQPGSSD. 4 EF-hand domains span residues 649 to 683, 692 to 725, 722 to 757, and 787 to 821; these read EEQQ…VVNK, FTLE…NKIK, NKIK…AGFH, and VRLE…TMYA. The segment at 650-821 is domain IV; the sequence is EQQQFRNIFK…LEWLQLTMYA (172 aa). The Ca(2+) site is built by alanine 662, aspartate 665, glutamate 667, glutamate 672, aspartate 705, aspartate 707, serine 709, lysine 711, glutamate 716, aspartate 735, aspartate 737, serine 739, threonine 741, glutamate 746, aspartate 800, aspartate 802, aspartate 804, and isoleucine 806.

Belongs to the peptidase C2 family. As to quaternary structure, homodimer; via EF-hand domain 4. Interacts with TTN/titin. Interacts with CMYA5; this interaction, which results in CMYA5 proteolysis, may protect CAPN3 from autolysis. Interacts with SIMC1. Interacts with UTP25; the interaction is required for CAPN3 translocation to the nucleolus. Isoform I is skeletal muscle specific.

The protein resides in the cytoplasm. It localises to the nucleus. Its subcellular location is the nucleolus. The catalysed reaction is Broad endopeptidase activity.. Its activity is regulated as follows. Activated by micromolar concentrations of calcium and inhibited by calpastatin. Calcium-regulated non-lysosomal thiol-protease. Proteolytically cleaves CTBP1 at 'His-409'. Mediates, with UTP25, the proteasome-independent degradation of p53/TP53. The protein is Calpain-3 of Homo sapiens (Human).